A 734-amino-acid polypeptide reads, in one-letter code: MFGQQLASDVQQYLERLEKQRQQKVGVDEASAGLTLGGDALRVPFLDFATATPKRHQTVVPGVGTLHDCCEHSPLFSAVARRLLFNSLVPAQLRGRDFGGDHTAKLEFLAPELVRAVARLRFRECAPEDAVPQRNAYYSVLNTFQALHRSEAFRQLVHFVRDFAQLLKTSFRASSLAETTGPPKKRAKVDVATHGQTYGTLELFQKMILMHATYFLAAVLLGDHAEQVNTFLRLVFEIPLFSDTAVRHFRQRATVFLVPRRHGKTWFLVPLIALSLASFRGIKIGYTAHIRKATEPVFDEIDACLRGWFGSSRVDHVKGETISFSFPDGSRSTIVFASSHNTNGIRGQDFNLLFVDEANFIRPDAVQTIMGFLNQANCKIIFVSSTNTGKASTSFLYNLRGAADELLNVVTYICDDHMPRVVTHTNATACSCYILNKPVFITMDGAVRRTADLFLPDSFMQEIIGGQARETGDDRPVLTKSAGERFLLYRPSTTTNSGLMAPELYVYVDPAFTANTRASGTGIAVVGRYRDDFIIFALEHFFLRALTGSAPADIARCVVHSLAQVLALHPGAFRSVRVAVEGNSSQDSAVAIATHVHTEMHRILASAGANGPGPELLFYHCEPPGGAVLYPFFLLNKQKTPAFEYFIKKFNSGGVMASQELVSVTVRLQTDPVEYLSEQLNNLIETVSPNTDVRMYSGKRNGAADDLMVAVIMAIYLAAPTGIPPAFFPITRTS.

The Nuclear localization signal motif lies at 183–189 (PKKRAKV). The short motif at 258–265 (VPRRHGKT) is the Walker A motif element. Positions 352-357 (LLFVDE) match the Walker B motif motif. The active-site For ATPase activity is Glu357. Catalysis depends on for nuclease activity residues Asp509, Glu581, and Asp706.

This sequence belongs to the herpesviridae TRM3 protein family. In terms of assembly, interacts with the terminase subunits TRM1 and TRM2. Interacts with portal protein.

It localises to the host nucleus. In terms of biological role, component of the molecular motor that translocates viral genomic DNA in empty capsid during DNA packaging. Forms a tripartite terminase complex together with TRM1 and TRM2 in the host cytoplasm. Once the complex reaches the host nucleus, it interacts with the capsid portal vertex. This portal forms a ring in which genomic DNA is translocated into the capsid. TRM3 carries an RNase H-like nuclease activity that plays an important role for the cleavage of concatemeric viral DNA into unit length genomes. This Human herpesvirus 2 (strain HG52) (HHV-2) protein is Tripartite terminase subunit 3.